The primary structure comprises 239 residues: uncharacterized protein (239 aa).

4 consecutive transmembrane segments (helical) span residues 9–29 (LAIY…SQII), 65–85 (IIYL…YLFI), 94–114 (IILI…TFVV), and 167–187 (IYFA…MHWI).

The protein resides in the cell membrane. This is an uncharacterized protein from Methanocaldococcus jannaschii (strain ATCC 43067 / DSM 2661 / JAL-1 / JCM 10045 / NBRC 100440) (Methanococcus jannaschii).